Consider the following 201-residue polypeptide: Large ribosomal subunit protein bL25 (201 aa).

It belongs to the bacterial ribosomal protein bL25 family. CTC subfamily. As to quaternary structure, part of the 50S ribosomal subunit; part of the 5S rRNA/L5/L18/L25 subcomplex. Contacts the 5S rRNA. Binds to the 5S rRNA independently of L5 and L18.

Its function is as follows. This is one of the proteins that binds to the 5S RNA in the ribosome where it forms part of the central protuberance. In Burkholderia lata (strain ATCC 17760 / DSM 23089 / LMG 22485 / NCIMB 9086 / R18194 / 383), this protein is Large ribosomal subunit protein bL25.